Consider the following 290-residue polypeptide: Light-independent protochlorophyllide reductase iron-sulfur ATP-binding protein (290 aa).

Residues 10–15 (GIGKST) and Lys39 contribute to the ATP site. Residue Ser14 participates in Mg(2+) binding. Residues Cys95 and Cys129 each contribute to the [4Fe-4S] cluster site. ATP is bound at residue 180–181 (NR).

Belongs to the NifH/BchL/ChlL family. Homodimer. Protochlorophyllide reductase is composed of three subunits; ChlL, ChlN and ChlB. [4Fe-4S] cluster serves as cofactor.

The protein localises to the plastid. It is found in the chloroplast. It catalyses the reaction chlorophyllide a + oxidized 2[4Fe-4S]-[ferredoxin] + 2 ADP + 2 phosphate = protochlorophyllide a + reduced 2[4Fe-4S]-[ferredoxin] + 2 ATP + 2 H2O. The protein operates within porphyrin-containing compound metabolism; chlorophyll biosynthesis (light-independent). Component of the dark-operative protochlorophyllide reductase (DPOR) that uses Mg-ATP and reduced ferredoxin to reduce ring D of protochlorophyllide (Pchlide) to form chlorophyllide a (Chlide). This reaction is light-independent. The L component serves as a unique electron donor to the NB-component of the complex, and binds Mg-ATP. The chain is Light-independent protochlorophyllide reductase iron-sulfur ATP-binding protein from Angiopteris evecta (Mule's foot fern).